Here is a 342-residue protein sequence, read N- to C-terminus: Ribosomal RNA small subunit methyltransferase C (342 aa).

This sequence belongs to the methyltransferase superfamily. RsmC family. As to quaternary structure, monomer.

The protein localises to the cytoplasm. It carries out the reaction guanosine(1207) in 16S rRNA + S-adenosyl-L-methionine = N(2)-methylguanosine(1207) in 16S rRNA + S-adenosyl-L-homocysteine + H(+). Specifically methylates the guanine in position 1207 of 16S rRNA in the 30S particle. In Shewanella loihica (strain ATCC BAA-1088 / PV-4), this protein is Ribosomal RNA small subunit methyltransferase C.